Here is a 209-residue protein sequence, read N- to C-terminus: Transcription factor atf31 (209 aa).

The segment covering 90 to 103 (SKSPSIISEASHNS) has biased composition (polar residues). A disordered region spans residues 90-133 (SKSPSIISEASHNSPSRELDDSGDENTSKLTGTKQSMLKARNRQ). The bZIP domain occupies 121–184 (GTKQSMLKAR…IKLRTLVFAH (64 aa)). A basic motif region spans residues 123-161 (KQSMLKARNRQAAQKCRIKKKKYLQTLQDQVNYYTSENK). The segment at 163–177 (LLQSANDLREEIIKL) is leucine-zipper.

It belongs to the bZIP family.

The protein localises to the nucleus. The protein is Transcription factor atf31 (atf31) of Schizosaccharomyces pombe (strain 972 / ATCC 24843) (Fission yeast).